The primary structure comprises 284 residues: 4-hydroxybenzoate octaprenyltransferase (284 aa).

Transmembrane regions (helical) follow at residues 16 to 36 (PIGILLLLWPTLWALWMASDG), 40 to 60 (WTLVAIFTLGTVLMRSAGCAV), 91 to 111 (LLVALVLTLLAFALIWPLNTL), 132 to 152 (FFAIPQAYLGIAFGFGIPMGF), 157 to 177 (NTVPAAAWWLLVANVFWSVAY), 207 to 227 (AIIMFCYAMTLGIIGIVGWQF), 231 to 251 (IWFVAGLLLAAVCAAYHYTLI), and 259 to 279 (CFAAFNHNNWLGGAIFGGVAL).

The protein belongs to the UbiA prenyltransferase family. The cofactor is Mg(2+).

Its subcellular location is the cell inner membrane. The enzyme catalyses all-trans-octaprenyl diphosphate + 4-hydroxybenzoate = 4-hydroxy-3-(all-trans-octaprenyl)benzoate + diphosphate. It functions in the pathway cofactor biosynthesis; ubiquinone biosynthesis. Catalyzes the prenylation of para-hydroxybenzoate (PHB) with an all-trans polyprenyl group. Mediates the second step in the final reaction sequence of ubiquinone-8 (UQ-8) biosynthesis, which is the condensation of the polyisoprenoid side chain with PHB, generating the first membrane-bound Q intermediate 3-octaprenyl-4-hydroxybenzoate. The protein is 4-hydroxybenzoate octaprenyltransferase of Janthinobacterium sp. (strain Marseille) (Minibacterium massiliensis).